A 160-amino-acid polypeptide reads, in one-letter code: Protein Bel-3 (160 aa).

As to quaternary structure, homodimer.

Its subcellular location is the host cytoplasm. The chain is Protein Bel-3 (bel3) from Human spumaretrovirus (SFVcpz(hu)).